The sequence spans 198 residues: MIKKSAAILAGGKSSRMNYRNKAFLKYEEDYFIERIIKALKDYEEIIIISNNPEEYKEFGLKVFKDIYPSQGPLSGIHSALNHIKNDYCLVVACDMPFINKDVVNYLGNIKEDYEILIPKFQERLQPLCAIYKKSCKDIMEKELINNSNKLIKTCFKFSMKVVEEFPFIEKVHKKEIKNFYNINTVDEYEDLIKKKEI.

Residues 9–11, lysine 22, aspartate 66, and aspartate 95 each bind GTP; that span reads LAG. Residue aspartate 95 participates in Mg(2+) binding.

Belongs to the MobA family. Requires Mg(2+) as cofactor.

The protein resides in the cytoplasm. The enzyme catalyses Mo-molybdopterin + GTP + H(+) = Mo-molybdopterin guanine dinucleotide + diphosphate. Its function is as follows. Transfers a GMP moiety from GTP to Mo-molybdopterin (Mo-MPT) cofactor (Moco or molybdenum cofactor) to form Mo-molybdopterin guanine dinucleotide (Mo-MGD) cofactor. This Clostridium perfringens (strain 13 / Type A) protein is Probable molybdenum cofactor guanylyltransferase.